Here is a 350-residue protein sequence, read N- to C-terminus: GTPase Obg (350 aa).

Residues 1 to 159 (MRFIDQTEIF…FRLHLELKLL (159 aa)) form the Obg domain. The OBG-type G domain maps to 160–328 (AEVGIIGLPN…LLQQVWEELD (169 aa)). GTP contacts are provided by residues 166–173 (GLPNAGKS), 191–195 (FTTLI), 213–216 (DIPG), 280–283 (NKID), and 309–311 (SAV). The Mg(2+) site is built by Ser-173 and Thr-193.

This sequence belongs to the TRAFAC class OBG-HflX-like GTPase superfamily. OBG GTPase family. As to quaternary structure, monomer. Mg(2+) is required as a cofactor.

It is found in the cytoplasm. In terms of biological role, an essential GTPase which binds GTP, GDP and possibly (p)ppGpp with moderate affinity, with high nucleotide exchange rates and a fairly low GTP hydrolysis rate. Plays a role in control of the cell cycle, stress response, ribosome biogenesis and in those bacteria that undergo differentiation, in morphogenesis control. The protein is GTPase Obg of Acaryochloris marina (strain MBIC 11017).